The sequence spans 140 residues: Sperm protein associated with the nucleus on the X chromosome N3 (140 aa).

Polar residues-rich tracts occupy residues 1–20, 62–79, and 131–140; these read MEQP…CKSN, INSN…SINP, and EGSSQDSGED. The segment at 1–140 is disordered; the sequence is MEQPTSSTNG…EGSSQDSGED (140 aa).

Belongs to the SPAN-X family.

In Pan troglodytes (Chimpanzee), this protein is Sperm protein associated with the nucleus on the X chromosome N3 (SPANXN3).